We begin with the raw amino-acid sequence, 325 residues long: Serpentine receptor class gamma-16 (325 aa).

7 consecutive transmembrane segments (helical) span residues phenylalanine 25–isoleucine 45, valine 65–proline 85, leucine 87–tryptophan 107, leucine 144–leucine 164, tryptophan 187–isoleucine 207, phenylalanine 232–valine 252, and leucine 264–leucine 284.

Belongs to the nematode receptor-like protein srg family.

The protein localises to the membrane. This chain is Serpentine receptor class gamma-16 (srg-16), found in Caenorhabditis elegans.